Reading from the N-terminus, the 98-residue chain is Large ribosomal subunit protein uL23 (98 aa).

Belongs to the universal ribosomal protein uL23 family. As to quaternary structure, part of the 50S ribosomal subunit. Contacts protein L29, and trigger factor when it is bound to the ribosome.

In terms of biological role, one of the early assembly proteins it binds 23S rRNA. One of the proteins that surrounds the polypeptide exit tunnel on the outside of the ribosome. Forms the main docking site for trigger factor binding to the ribosome. This chain is Large ribosomal subunit protein uL23, found in Alcanivorax borkumensis (strain ATCC 700651 / DSM 11573 / NCIMB 13689 / SK2).